The following is a 424-amino-acid chain: tRNA (guanine-N(7)-)-methyltransferase non-catalytic subunit wuho (424 aa).

The segment at Leu42–Gly92 is disordered. Residues Thr46–Gln68 are compositionally biased toward low complexity. WD repeat units lie at residues Ala96 to Leu137, Gly184 to Ser223, Gly227 to Gln265, and Ala324 to Ser364.

It belongs to the WD repeat TRM82 family. Forms a heterodimer with the catalytic subunit Mettl1. Interacts with mei-P26 and weakly interacts with bgcn; required for the function or formation of the mei-P26-bgcn-bam-sxl complex. Interacts with nanos; may be involved in mei-P26-dependent derepression of the BMP signaling pathway. Interacts with Myc; the interaction may be mediated by mei-P26 and may be involved in the regulation of ribosome biogenesis. As to expression, in testis, it is present at high level in hub cells, a niche for germline stem cells of testis. Ubiquitously expressed in all testicular cells throughout spermatogenesis. Ubiquitously expressed in all germline and somatic cells of the ovary.

It localises to the nucleus. The protein localises to the cytoplasm. Its pathway is tRNA modification; N(7)-methylguanine-tRNA biosynthesis. In terms of biological role, required for the Mettl1-dependent formation of N(7)-methylguanine at position 46 (m7G46) in tRNA. In the Mettl1-wuho methyltransferase complex, it is required to stabilize and induce conformational changes of the catalytic subunit. Required for binding of nanos mRNA and repression of translation by the mei-P26-bgcn-bam-sxl complex. May cooperate with mei-P26 and nanos to derepress the BMP signaling pathway. May cooperate with mei-P26 to suppress expression of a subset of microRNAs. May cooperate with mei-P26 to regulate bam expression levels in germline cells during gametogenesis. Required to promote mitosis to meiosis transition during gametogenesis. May regulate germline cell division in part by regulating ribosome biogenesis. The polypeptide is tRNA (guanine-N(7)-)-methyltransferase non-catalytic subunit wuho (Drosophila melanogaster (Fruit fly)).